The chain runs to 354 residues: MLKNDRLLRALNRQPVDRTPVWLMRQAGRYLPEYRATRARAGSFLGMAKNPDIACEVTLQPLQRFPLDAAILFSDILTIPDAMGLELYFVEGEGPKFRHPVRDAAAIHRLGVPDMETELRYVMDAVRVIRRELDGSVPLIGFSGSPWTLACYMIEGGGSKEYARIKAMAFNAPELLHHLLNTVTDAVIAYLAAQRAAGAQALQVFDTWGGVLSPAMYREFSLPYLTRIARELERGDGAERTPLVLFGKGNGAYVADLAASGAEAVGVDWTISLADAAQRAGGRVALQGNLDPATLYGSPEAIRAEVGKTLDSYAQGNGGSREGHVFNLGHGMSPDMNPEHVGVLVEAVQTLSKR.

Substrate-binding positions include 25-29 (RQAGR), F44, D75, Y152, T207, and H330.

It belongs to the uroporphyrinogen decarboxylase family. In terms of assembly, homodimer.

It localises to the cytoplasm. It carries out the reaction uroporphyrinogen III + 4 H(+) = coproporphyrinogen III + 4 CO2. Its pathway is porphyrin-containing compound metabolism; protoporphyrin-IX biosynthesis; coproporphyrinogen-III from 5-aminolevulinate: step 4/4. Its function is as follows. Catalyzes the decarboxylation of four acetate groups of uroporphyrinogen-III to yield coproporphyrinogen-III. In Xanthomonas axonopodis pv. citri (strain 306), this protein is Uroporphyrinogen decarboxylase.